Here is a 381-residue protein sequence, read N- to C-terminus: E3 ubiquitin-protein ligase At1g63170 (381 aa).

The disordered stretch occupies residues 1 to 23 (MSRETTTEATPLILTDGGGGRRS). A run of 2 helical transmembrane segments spans residues 74 to 94 (VVVL…AVLV) and 107 to 127 (VWII…CVEY). Residues 135-161 (RRDLSPRSSSSSSSSSSSMDEEEGLGL) are disordered. A compositionally biased stretch (low complexity) spans 140-152 (PRSSSSSSSSSSS). A coiled-coil region spans residues 170–194 (LELGQLENENNSFAKHLESANTMIS). 3 helical membrane-spanning segments follow: residues 189-209 (ANTM…SSGG), 224-244 (IVFL…ACVI), and 245-265 (GIAV…VAEQ). The RING-type; atypical zinc finger occupies 325-366 (CCICLSAYEDETELRELPCGHHFHCGCVDKWLYINATCPLCK).

The protein localises to the membrane. The catalysed reaction is S-ubiquitinyl-[E2 ubiquitin-conjugating enzyme]-L-cysteine + [acceptor protein]-L-lysine = [E2 ubiquitin-conjugating enzyme]-L-cysteine + N(6)-ubiquitinyl-[acceptor protein]-L-lysine.. It functions in the pathway protein modification; protein ubiquitination. Functionally, mediates E2-dependent protein ubiquitination. This Arabidopsis thaliana (Mouse-ear cress) protein is E3 ubiquitin-protein ligase At1g63170.